Here is a 266-residue protein sequence, read N- to C-terminus: Ribosomal RNA small subunit methyltransferase A (266 aa).

S-adenosyl-L-methionine-binding residues include asparagine 13, leucine 15, glycine 40, glutamate 61, aspartate 86, and asparagine 110.

Belongs to the class I-like SAM-binding methyltransferase superfamily. rRNA adenine N(6)-methyltransferase family. RsmA subfamily.

It is found in the cytoplasm. The catalysed reaction is adenosine(1518)/adenosine(1519) in 16S rRNA + 4 S-adenosyl-L-methionine = N(6)-dimethyladenosine(1518)/N(6)-dimethyladenosine(1519) in 16S rRNA + 4 S-adenosyl-L-homocysteine + 4 H(+). In terms of biological role, specifically dimethylates two adjacent adenosines (A1518 and A1519) in the loop of a conserved hairpin near the 3'-end of 16S rRNA in the 30S particle. May play a critical role in biogenesis of 30S subunits. The chain is Ribosomal RNA small subunit methyltransferase A from Hydrogenovibrio crunogenus (strain DSM 25203 / XCL-2) (Thiomicrospira crunogena).